We begin with the raw amino-acid sequence, 147 residues long: Angiogenin (147 aa).

The first 24 residues, 1-24, serve as a signal peptide directing secretion; the sequence is MVMGLGVLLLVFVLGLGLTPPTLA. Pyrrolidone carboxylic acid is present on Gln-25. His-37 (proton acceptor) is an active-site residue. Arg-45 and Asp-46 together coordinate tRNA. Disulfide bonds link Cys-50-Cys-105, Cys-63-Cys-116, and Cys-81-Cys-131. The Nucleolar localization signal motif lies at 55-59; the sequence is RRRGL. Cys-105 and Val-127 together coordinate tRNA. Residue His-138 is the Proton donor of the active site.

It belongs to the pancreatic ribonuclease family. As to quaternary structure, homodimer. Interacts with RNH1; inhibiting ANG ribonuclease activity. Interacts with PCNA.

Its subcellular location is the secreted. It is found in the nucleus. It localises to the nucleolus. The protein localises to the cytoplasm. The protein resides in the stress granule. Its activity is regulated as follows. Has weak tRNA ribonuclease activity by itself due to partial autoinhibition by its C-terminus, which folds into a short alpha-helix that partially occludes the substrate-binding site. In absence of stress, the ribonuclease activity is inhibited by RNH1 in the cytoplasm. In response to stress, dissociates from RNH1 in the cytoplasm and associates with cytoplasmic ribosomes with vacant A-sites: ribosomes directly activate the tRNA ribonuclease activity of ANG by refolding the C-terminal alpha-helix. In response to stress, the angiogenic activity of ANG is inhibited by RNH1 in the nucleus. In terms of biological role, secreted ribonuclease that can either promote or restrict cell proliferation of target cells, depending on the context. Endocytosed in target cells via its receptor PLXNB2 and translocates to the cytoplasm or nucleus. Under stress conditions, localizes to the cytoplasm and promotes the assembly of stress granules (SGs): specifically cleaves a subset of tRNAs within anticodon loops to produce tRNA-derived stress-induced fragments (tiRNAs), resulting in translation repression and inhibition of cell proliferation. tiRNas also prevent formation of apoptosome, thereby promoting cell survival. Preferentially cleaves RNAs between a pyrimidine and an adenosine residue, suggesting that it cleaves the anticodon loop of tRNA(Ala) (32-UUAGCAU-38) after positions 33 and 36. Cleaves a subset of tRNAs, including tRNA(Ala), tRNA(Glu), tRNA(Gly), tRNA(Lys), tRNA(Val), tRNA(His), tRNA(Asp) and tRNA(Sec). Under growth conditions and in differentiated cells, translocates to the nucleus and stimulates ribosomal RNA (rRNA) transcription, including that containing the initiation site sequences of 45S rRNA, thereby promoting cell growth and proliferation. Angiogenin induces vascularization of normal and malignant tissues via its ability to promote rRNA transcription. Involved in hematopoietic stem and progenitor cell (HSPC) growth and survival by promoting rRNA transcription in growth conditions and inhibiting translation in response to stress, respectively. Mediates the crosstalk between myeloid and intestinal epithelial cells to protect the intestinal epithelial barrier integrity: secreted by myeloid cells and promotes intestinal epithelial cells proliferation and survival. Also mediates osteoclast-endothelial cell crosstalk in growing bone: produced by osteoclasts and protects the neighboring vascular cells against senescence by promoting rRNA transcription. The chain is Angiogenin (ANG) from Gorilla gorilla gorilla (Western lowland gorilla).